Consider the following 54-residue polypeptide: Conotoxin vc5c (54 aa).

A signal peptide spans 1–14 (VILLLLIASIPSDA). Residues 15-43 (VQLKTKDDMPLASFHGNARRTLQMLSNKR) constitute a propeptide that is removed on maturation. 4-carboxyglutamate is present on E50. A 6'-bromotryptophan modification is found at W51.

It belongs to the conotoxin T superfamily. Post-translationally, contains 2 disulfide bonds that can be either 'C1-C3, C2-C4' or 'C1-C4, C2-C3', since these disulfide connectivities have been observed for conotoxins with cysteine framework V (for examples, see AC P0DQQ7 and AC P81755). Expressed by the venom duct.

It localises to the secreted. The protein is Conotoxin vc5c of Conus victoriae (Queen Victoria cone).